A 352-amino-acid polypeptide reads, in one-letter code: Ion-translocating oxidoreductase complex subunit D (352 aa).

Transmembrane regions (helical) follow at residues 20 to 40 (IMLL…WFFG), 42 to 62 (GTLV…ALVL), 78 to 109 (ALLT…VIIA), 123 to 143 (PAMI…TSWL), and 148 to 168 (IAVN…GHIT). Threonine 187 is subject to FMN phosphoryl threonine. 5 helical membrane passes run 215 to 235 (LAGV…VWLL), 242 to 262 (WHIP…GWLF), 267 to 287 (LAAP…FFIL), 301 to 321 (LIFG…GGYP), and 322 to 342 (DGVA…DYYT).

The protein belongs to the NqrB/RnfD family. The complex is composed of six subunits: RsxA, RsxB, RsxC, RsxD, RsxE and RsxG. It depends on FMN as a cofactor.

It is found in the cell inner membrane. Part of a membrane-bound complex that couples electron transfer with translocation of ions across the membrane. Required to maintain the reduced state of SoxR. The sequence is that of Ion-translocating oxidoreductase complex subunit D from Escherichia coli (strain SMS-3-5 / SECEC).